Here is a 271-residue protein sequence, read N- to C-terminus: Shikimate dehydrogenase (NADP(+)) (271 aa).

Shikimate contacts are provided by residues 15-17 (SKS) and T62. The Proton acceptor role is filled by K66. E78 serves as a coordination point for NADP(+). Positions 87 and 103 each coordinate shikimate. NADP(+)-binding positions include 127 to 131 (GAGGA), 151 to 156 (NRTQAK), and M214. Y216 provides a ligand contact to shikimate. G238 contributes to the NADP(+) binding site.

This sequence belongs to the shikimate dehydrogenase family. As to quaternary structure, homodimer.

The catalysed reaction is shikimate + NADP(+) = 3-dehydroshikimate + NADPH + H(+). It participates in metabolic intermediate biosynthesis; chorismate biosynthesis; chorismate from D-erythrose 4-phosphate and phosphoenolpyruvate: step 4/7. In terms of biological role, involved in the biosynthesis of the chorismate, which leads to the biosynthesis of aromatic amino acids. Catalyzes the reversible NADPH linked reduction of 3-dehydroshikimate (DHSA) to yield shikimate (SA). This is Shikimate dehydrogenase (NADP(+)) from Shewanella pealeana (strain ATCC 700345 / ANG-SQ1).